The chain runs to 59 residues: MFTLKKSMLLLLFLGTISLTLCEEERDANEEEENGGEVKEEEKRFIGPLISALASLFKG.

A signal peptide spans 1 to 22 (MFTLKKSMLLLLFLGTISLTLC). A propeptide spanning residues 23 to 42 (EEERDANEEEENGGEVKEEE) is cleaved from the precursor.

This sequence belongs to the frog skin active peptide (FSAP) family. Temporin subfamily. As to expression, expressed by the skin glands.

The protein localises to the secreted. Its function is as follows. Antimicrobial peptide. This is Temporin-CDYd from Rana dybowskii (Dybovsky's frog).